Here is a 161-residue protein sequence, read N- to C-terminus: Cyclic pyranopterin monophosphate synthase (161 aa).

Residues 75 to 77 and 113 to 114 contribute to the substrate site; these read LCH and ME. D128 is a catalytic residue.

Belongs to the MoaC family. As to quaternary structure, homohexamer; trimer of dimers.

The catalysed reaction is (8S)-3',8-cyclo-7,8-dihydroguanosine 5'-triphosphate = cyclic pyranopterin phosphate + diphosphate. It functions in the pathway cofactor biosynthesis; molybdopterin biosynthesis. In terms of biological role, catalyzes the conversion of (8S)-3',8-cyclo-7,8-dihydroguanosine 5'-triphosphate to cyclic pyranopterin monophosphate (cPMP). In Salmonella typhi, this protein is Cyclic pyranopterin monophosphate synthase.